We begin with the raw amino-acid sequence, 423 residues long: GPI mannosyltransferase 2 (423 aa).

A run of 9 helical transmembrane segments spans residues 7-27 (LTLI…ILSG), 102-122 (VILG…LVLY), 128-148 (IFNP…PTAT), 151-171 (APYT…LLSI), 191-211 (TGIF…AHIF), 228-248 (FLSA…TETV), 298-318 (LAMP…SHLV), 333-353 (PPPI…LLLF), and 400-420 (YWIG…AGHY).

Belongs to the PIGV family.

The protein localises to the endoplasmic reticulum membrane. It participates in glycolipid biosynthesis; glycosylphosphatidylinositol-anchor biosynthesis. In terms of biological role, mannosyltransferase involved in glycosylphosphatidylinositol-anchor biosynthesis. Transfers the second mannose to the glycosylphosphatidylinositol during GPI precursor assembly. The chain is GPI mannosyltransferase 2 (GPI18) from Cryptococcus neoformans var. neoformans serotype D (strain JEC21 / ATCC MYA-565) (Filobasidiella neoformans).